Consider the following 714-residue polypeptide: Polyribonucleotide nucleotidyltransferase (714 aa).

Residues aspartate 489 and aspartate 495 each contribute to the Mg(2+) site. Residues 556–615 form the KH domain; sequence PKIDTIKIDVDKIKVVIGKGGETIDKIIAETGVKIDIDEEGNVSIYSSDQDAINRAKEII. Residues 625 to 693 form the S1 motif domain; it reads GEVYHAKVVR…DKGRIDASMK (69 aa). A disordered region spans residues 691-714; sequence SMKALVPRPPKPEKSEAKKEGKHD. The segment covering 700 to 714 has biased composition (basic and acidic residues); it reads PKPEKSEAKKEGKHD.

Belongs to the polyribonucleotide nucleotidyltransferase family. Requires Mg(2+) as cofactor.

The protein resides in the cytoplasm. It carries out the reaction RNA(n+1) + phosphate = RNA(n) + a ribonucleoside 5'-diphosphate. Functionally, involved in mRNA degradation. Catalyzes the phosphorolysis of single-stranded polyribonucleotides processively in the 3'- to 5'-direction. The polypeptide is Polyribonucleotide nucleotidyltransferase (Streptococcus equi subsp. zooepidemicus (strain H70)).